Here is a 510-residue protein sequence, read N- to C-terminus: Leucine-rich repeat-containing protein 14B (510 aa).

An LRR 1; degenerate repeat occupies 100–137; the sequence is SNRLRVADFTGIQDVQVQQCPCGRALGRWGRTKVLART. The stretch at 181–205 is one LRR 2; degenerate repeat; the sequence is QVCCPSLRADSLSPGQLLQVLGLAG. The stretch at 234–273 is one LRR 4; degenerate repeat; it reads FPQLTSLTLPTKAFDAPPTCAPDPEGEDLLLTSIAWELSQ. LRR repeat units follow at residues 274–298, 299–330, 331–349, 355–382, and 383–407; these read MNQL…LSPL, KTPL…AHLE, VLDL…TFFR, AQTL…GLSP, and CSQL…LFAA.

It belongs to the PRAME family. LRRC14 subfamily.

In Mus musculus (Mouse), this protein is Leucine-rich repeat-containing protein 14B.